Consider the following 38-residue polypeptide: Potassium channel toxin alpha-KTx 2.10 (38 aa).

3 disulfides stabilise this stretch: cysteine 7–cysteine 29, cysteine 13–cysteine 34, and cysteine 17–cysteine 36.

Expressed by the venom gland.

It localises to the secreted. Its function is as follows. Blocks human voltage-gated potassium (Kv) channel Kv1.2/KCNA2. Does not inhibit human Kv1.1/KCNA1 at 100nM concentration. The protein is Potassium channel toxin alpha-KTx 2.10 of Centruroides bonito (Scorpion).